A 260-amino-acid chain; its full sequence is Adenosylcobinamide-GDP ribazoletransferase (260 aa).

8 helical membrane-spanning segments follow: residues 3–23 (APLW…LPAW), 36–56 (FAPW…LVLI), 60–80 (WPTS…SGGL), 108–128 (VGAS…ASLL), 133–153 (LAPL…LWAM), 180–200 (ALPA…LMIV), 206–226 (MVLM…PELL), and 239–259 (GASV…LLPA).

This sequence belongs to the CobS family. Requires Mg(2+) as cofactor.

Its subcellular location is the cell inner membrane. It carries out the reaction alpha-ribazole + adenosylcob(III)inamide-GDP = adenosylcob(III)alamin + GMP + H(+). The enzyme catalyses alpha-ribazole 5'-phosphate + adenosylcob(III)inamide-GDP = adenosylcob(III)alamin 5'-phosphate + GMP + H(+). It participates in cofactor biosynthesis; adenosylcobalamin biosynthesis; adenosylcobalamin from cob(II)yrinate a,c-diamide: step 7/7. Functionally, joins adenosylcobinamide-GDP and alpha-ribazole to generate adenosylcobalamin (Ado-cobalamin). Also synthesizes adenosylcobalamin 5'-phosphate from adenosylcobinamide-GDP and alpha-ribazole 5'-phosphate. This is Adenosylcobinamide-GDP ribazoletransferase from Prochlorococcus marinus (strain MIT 9313).